A 390-amino-acid chain; its full sequence is MGDTFIRHIALLGFEKRFVPSQHYVYMFLVKWQDLSEKVVYRRFTEIYEFHKTLKEMFPIEAGAINPENRIIPHLPAPKWFDGQRAAENRQGTLTEYCSTLMSLPTKISRCPHLLDFFKVRPDDLKLPTDNQTKKPETYLMPKDGKSTATDITGPIILQTYRAIANYEKTSGSEMALSTGDVVEVVEKSESGWWFCQMKAKRGWIPASFLEPLDSPDETEDPEPNYAGEPYVAIKAYTAVEGDEVSLLEGEAVEVIHKLLDGWWVIRKDDVTGYFPSMYLQKSGQDVSQAQRQIKRGAPPRRSSIRNAHSIHQRSRKRLSQDAYRRNSVRFLQQRRRQARPGPQSPGSPLEEERQTQRSKPQPAVPPRPSADLILNRCSESTKRKLASAV.

The region spanning 4 to 125 (TFIRHIALLG…DFFKVRPDDL (122 aa)) is the PX domain. 2 consecutive SH3 domains span residues 156–215 (IILQ…PLDS) and 226–285 (YAGE…KSGQ). Residues 285–390 (QDVSQAQRQI…STKRKLASAV (106 aa)) are disordered. Phosphoserine is present on residues serine 303 and serine 304. The span at 309 to 318 (HSIHQRSRKR) shows a compositional bias: basic residues. Phosphoserine occurs at positions 320, 328, 345, and 348.

As to quaternary structure, component of the phagocyte NADPH oxidase complex composed of an obligatory core heterodimer formed by the membrane proteins CYBA and CYBB and the cytosolic regulatory subunits NCF1/p47-phox, NCF2/p67-phox, NCF4/p40-phox and the small GTPase RAC1 or RAC2. Part of a cytosolic complex composed at least by NCF1, NCF2 and NCF4. Interacts (via C-terminus) with NCF2 (via the C-terminal SH3 domain). Interacts with NCF4. Interacts with CYBB. Interacts (via the second SH3 domain) with CYBA; interaction is phosphorylation-dependent. Interacts with NOXA1. Interacts with ADAM15. Interacts with TRAF4. Interacts with FASLG. Interacts with PARK7 (via C-terminus); the interaction is enhanced by LPS and modulates NCF1 phosphorylation and membrane translocation. Phosphorylated by PRKCD; phosphorylation induces activation of NCF1, leading to assembly and activation of the NADPH oxidase complex. As to expression, detected in peripheral blood monocytes and neutrophils (at protein level).

The protein resides in the cytoplasm. Its subcellular location is the cytosol. It localises to the membrane. In terms of biological role, subunit of the phagocyte NADPH oxidase complex that mediates the transfer of electrons from cytosolic NADPH to O2 to produce the superoxide anion (O2(-)). In the activated complex, electrons are first transferred from NADPH to flavin adenine dinucleotide (FAD) and subsequently transferred via two heme molecules to molecular oxygen, producing superoxide through an outer-sphere reaction. Activation of the NADPH oxidase complex is initiated by the assembly of cytosolic subunits of the NADPH oxidase complex with the core NADPH oxidase complex to form a complex at the plasma membrane or phagosomal membrane. This activation process is initiated by phosphorylation dependent binding of the cytosolic NCF1/p47-phox subunit to the C-terminus of CYBA/p22-phox. This is Neutrophil cytosol factor 1 from Homo sapiens (Human).